The chain runs to 233 residues: Probable chemoreceptor glutamine deamidase CheD (233 aa).

This sequence belongs to the CheD family.

It catalyses the reaction L-glutaminyl-[protein] + H2O = L-glutamyl-[protein] + NH4(+). In terms of biological role, probably deamidates glutamine residues to glutamate on methyl-accepting chemotaxis receptors (MCPs), playing an important role in chemotaxis. This is Probable chemoreceptor glutamine deamidase CheD from Vibrio cholerae serotype O1 (strain ATCC 39315 / El Tor Inaba N16961).